We begin with the raw amino-acid sequence, 407 residues long: Phosphonoacetate hydrolase (407 aa).

Asp-25, Thr-64, Asp-202, His-206, Asp-241, His-242, and His-368 together coordinate Zn(2+). Positions 64 and 202 each coordinate substrate. 2 residues coordinate substrate: His-242 and His-368.

It belongs to the alkaline phosphatase family. PhnA subfamily. As to quaternary structure, homodimer. Requires Zn(2+) as cofactor.

The enzyme catalyses phosphonoacetate + H2O = acetate + phosphate + H(+). Completely inhibited by EDTA and 1,10-phenanthroline. Moderately inhibited by the phosphonocarboxylic acids phosphonoformate and 3-phosphonopropionate and the phosphonate herbicide glyphosate. Partially inhibited by the reducing agents sodium sulfide and dithiotheitol and the chelating agent iminodiacetate. Nonphosphonate analogs of phosphonoacetate, such as arsonoacetate, sulfonoacetate and malonate are poor inhibitors. Inorganic phosphate, acetate and the known phosphonotase inhibitor phosphite have little effect on activity. Not inhibited by the alkylphosphonic acids methylphosphonate and ethylphosphonate, or the aminoalkylphosphonates 2-aminoethylphosphonate, 3-aminopropylphosphonate and 4-aminobutylphosphonate. Fe(3+), Ca(2+), Mg(2+) and Cs(+) have no effect on activity. Activity is slightly increased by the aminoalkylphosphonates 1-aminoethylphosphonate, 1-aminobutylphosphonate, 2-amino-4-butylphosphonate. Activity is increased by Zn(2+), Mn(2+) and Co(2+), these 3 metal ions also allow recovery of activity after EDTA treatment. Its function is as follows. Specifically hydrolyzes phosphonoacetate. Does not have activity on other organophosphonates or acetates. The polypeptide is Phosphonoacetate hydrolase (Pseudomonas fluorescens).